A 132-amino-acid chain; its full sequence is MQGPMKNTVADFWKVVWQQHSHVIVMLTKIKEGGNEKCHQYWCPYEDNLLVTEEYTIKTLRVTVRPNYIRTFLEITDKTTQRSRKITHFQCLHWPEHSMPSDLAWFIDFIKMTNRVRKAVHEDILGRFQRVF.

Residues 1-132 (MQGPMKNTVA…DILGRFQRVF (132 aa)) form the Tyrosine-protein phosphatase domain.

The protein belongs to the protein-tyrosine phosphatase family.

The sequence is that of Tyrosine phosphatase-like protein N2 (N4) from Microplitis demolitor (Parasitoid wasp).